Consider the following 200-residue polypeptide: Peptidyl-tRNA hydrolase (200 aa).

Tyr-15 is a tRNA binding site. Catalysis depends on His-20, which acts as the Proton acceptor. TRNA-binding residues include Tyr-66, Asn-68, and Asn-114.

It belongs to the PTH family. Monomer.

The protein localises to the cytoplasm. The catalysed reaction is an N-acyl-L-alpha-aminoacyl-tRNA + H2O = an N-acyl-L-amino acid + a tRNA + H(+). Its function is as follows. Hydrolyzes ribosome-free peptidyl-tRNAs (with 1 or more amino acids incorporated), which drop off the ribosome during protein synthesis, or as a result of ribosome stalling. Functionally, catalyzes the release of premature peptidyl moieties from peptidyl-tRNA molecules trapped in stalled 50S ribosomal subunits, and thus maintains levels of free tRNAs and 50S ribosomes. The polypeptide is Peptidyl-tRNA hydrolase (Paraburkholderia phymatum (strain DSM 17167 / CIP 108236 / LMG 21445 / STM815) (Burkholderia phymatum)).